Consider the following 200-residue polypeptide: MLSSVWVALGLSLTCTSAFSLISPAWFQTPTFSFGILTYCSWPQGNSWNQSCVTFSSLEDIPDFAWKVSAVMLLGGWLLLAFNAIFLLSWAVAPKGLCPRRSSVPMPGVQAVAATAMIVGLLIFPIGLASPFIKEVCEASSMYYGGKCRLGWGYMTAILNAVLASLLPIISWPHTTKVQGRTIIFSSATERIIFVPEMNK.

4 helical membrane-spanning segments follow: residues valine 5 to phenylalanine 27, valine 68 to leucine 88, alanine 113 to isoleucine 133, and leucine 150 to isoleucine 170.

This sequence belongs to the TMEM211 family.

Its subcellular location is the membrane. This Homo sapiens (Human) protein is LHFPL tetraspan subfamily member 7 protein.